Consider the following 426-residue polypeptide: Serine--tRNA ligase (426 aa).

The span at 1 to 15 shows a compositional bias: basic and acidic residues; it reads MIDVKDLSENPDKFR. The interval 1-22 is disordered; sequence MIDVKDLSENPDKFRASQRARG. 228-230 lines the L-serine pocket; it reads TSE. ATP contacts are provided by residues 259–261 and Val275; that span reads RRE. Glu282 lines the L-serine pocket. 346 to 349 lines the ATP pocket; that stretch reads ELTS. Thr386 is an L-serine binding site.

The protein belongs to the class-II aminoacyl-tRNA synthetase family. Type-1 seryl-tRNA synthetase subfamily. Homodimer. The tRNA molecule binds across the dimer.

It localises to the cytoplasm. It carries out the reaction tRNA(Ser) + L-serine + ATP = L-seryl-tRNA(Ser) + AMP + diphosphate + H(+). It catalyses the reaction tRNA(Sec) + L-serine + ATP = L-seryl-tRNA(Sec) + AMP + diphosphate + H(+). It participates in aminoacyl-tRNA biosynthesis; selenocysteinyl-tRNA(Sec) biosynthesis; L-seryl-tRNA(Sec) from L-serine and tRNA(Sec): step 1/1. In terms of biological role, catalyzes the attachment of serine to tRNA(Ser). Is also able to aminoacylate tRNA(Sec) with serine, to form the misacylated tRNA L-seryl-tRNA(Sec), which will be further converted into selenocysteinyl-tRNA(Sec). The protein is Serine--tRNA ligase of Pseudarthrobacter chlorophenolicus (strain ATCC 700700 / DSM 12829 / CIP 107037 / JCM 12360 / KCTC 9906 / NCIMB 13794 / A6) (Arthrobacter chlorophenolicus).